The chain runs to 143 residues: Trypsin inhibitor CMc (143 aa).

An N-terminal signal peptide occupies residues 1–24 (MASCSQHLLSAVAIFSVLAGVATA).

This sequence belongs to the protease inhibitor I6 (cereal trypsin/alpha-amylase inhibitor) family. In terms of tissue distribution, endosperm.

The protein resides in the secreted. Trypsin inhibitor. No alpha-amylase inhibition detected. The polypeptide is Trypsin inhibitor CMc (ITR2) (Hordeum vulgare (Barley)).